We begin with the raw amino-acid sequence, 730 residues long: Dual function macrocyclase-peptidase POPB (730 aa).

The segment at 1 to 34 is disordered; the sequence is MSSVTWAPGNYPSTRRSDHVDTYQSASKGEVPVP. Active-site charge relay system residues include Ser577, Asp661, and His698.

The protein belongs to the peptidase S9A family. As to quaternary structure, monomer.

The catalysed reaction is Hydrolysis of Pro-|-Xaa &gt;&gt; Ala-|-Xaa in oligopeptides.. Functionally, dual function macrocyclase-peptidase involved in the biosynthesis of the highly toxic amanitin toxin family of macrocycles. Cleaves peptide bonds on the C-terminal side of prolyl residues. The enzyme first removes 10 residues from the N-terminus of a 35-residue substrate. Conformational trapping of the 25 amino-acid peptide forces the enzyme to release this intermediate rather than proceed to macrocyclization. The enzyme rebinds the 25 amino-acid peptide in a different conformation and catalyzes macrocyclization of the N-terminal eight residues. The chain is Dual function macrocyclase-peptidase POPB from Galerina marginata (strain CBS 339.88).